A 1493-amino-acid chain; its full sequence is Pleckstrin homology domain-containing family H member 2 (1493 aa).

Positions 20–175 form a coiled coil; sequence LESQLMKFRV…LQEVQGKKSS (156 aa). 4 disordered regions span residues 202-230, 245-335, 363-439, and 613-705; these read SPPQ…DMEE, NNRG…SSSI, LNSP…LPPP, and SSSP…EPLE. Residues 208 to 230 are compositionally biased toward basic and acidic residues; sequence KSEEMSKISSKEPEFTEGKDMEE. Composition is skewed to polar residues over residues 245–260 and 267–281; these read NNRG…CGSE and TSFA…NSGA. Over residues 374–388 the composition is skewed to basic and acidic residues; it reads LSKKEQDSSSDELNK. Polar residues-rich tracts occupy residues 389–409, 421–432, and 676–698; these read KFQS…TPSP, NSLSGKGTQLVP, and STDT…SSDN. 2 consecutive PH domains span residues 703-797 and 811-919; these read PLEK…NVLR and KPTM…VAAG. The MyTH4 domain occupies 955–1110; sequence HSKEGIISPL…PSRMEILSTL (156 aa). Residues 1121 to 1451 form the FERM domain; it reads FSIPVHFMNG…SYINNFHQQK (331 aa). Residues 1474–1493 are disordered; it reads MMGSQPLLSSSRPTKGPTLL.

Self-associates. Interacts with TGFB1I1. As to expression, kidney. Reduced expression in patients with focal segmental glomerulosclerosis.

It localises to the cytoplasm. The protein resides in the cytoskeleton. Its subcellular location is the cell membrane. It is found in the cell projection. The protein localises to the lamellipodium. Its function is as follows. In the kidney glomerulus may play a role in linking podocyte foot processes to the glomerular basement membrane. May be involved in stabilization of F-actin by attenuating its depolymerization. Can recruit TGFB1I1 from focal adhesions to podocyte lamellipodia. This Homo sapiens (Human) protein is Pleckstrin homology domain-containing family H member 2 (PLEKHH2).